Consider the following 604-residue polypeptide: Sulfite reductase [NADPH] flavoprotein alpha-component (604 aa).

A Flavodoxin-like domain is found at 65–203 (VTILYGSQTG…AAGQWHADVL (139 aa)). FMN is bound by residues 71–76 (SQTGNG), 118–121 (STHG), and 154–163 (LGDSSYEFFC). One can recognise an FAD-binding FR-type domain in the interval 236-453 (QNPYSAEVLV…VEPNKHFRLP (218 aa)). Residues Thr324, Leu358, 392 to 395 (RLYS), 410 to 412 (TVA), and 425 to 428 (GGAS) contribute to the FAD site. Residues 524–525 (SR), 530–534 (KIYVQ), and Asp566 each bind NADP(+). An FAD-binding site is contributed by Tyr604.

Belongs to the NADPH-dependent sulphite reductase flavoprotein subunit CysJ family. It in the N-terminal section; belongs to the flavodoxin family. This sequence in the C-terminal section; belongs to the flavoprotein pyridine nucleotide cytochrome reductase family. Alpha(8)-beta(8). The alpha component is a flavoprotein, the beta component is a hemoprotein. Requires FAD as cofactor. FMN serves as cofactor.

The catalysed reaction is hydrogen sulfide + 3 NADP(+) + 3 H2O = sulfite + 3 NADPH + 4 H(+). It functions in the pathway sulfur metabolism; hydrogen sulfide biosynthesis; hydrogen sulfide from sulfite (NADPH route): step 1/1. Its function is as follows. Component of the sulfite reductase complex that catalyzes the 6-electron reduction of sulfite to sulfide. This is one of several activities required for the biosynthesis of L-cysteine from sulfate. The flavoprotein component catalyzes the electron flow from NADPH -&gt; FAD -&gt; FMN to the hemoprotein component. This Shewanella sp. (strain MR-4) protein is Sulfite reductase [NADPH] flavoprotein alpha-component.